The chain runs to 257 residues: Probable amino-acid ABC transporter ATP-binding protein y4tH (257 aa).

Positions isoleucine 6 to leucine 251 constitute an ABC transporter domain. An ATP-binding site is contributed by glycine 38–serine 45.

The protein belongs to the ABC transporter superfamily.

Its subcellular location is the cell inner membrane. Functionally, probably part of a binding-protein-dependent transport system y4tEFGH for an amino acid. Probably responsible for energy coupling to the transport system. This is Probable amino-acid ABC transporter ATP-binding protein y4tH from Sinorhizobium fredii (strain NBRC 101917 / NGR234).